We begin with the raw amino-acid sequence, 508 residues long: MPNDQTHPFRGVNALPFEERYDNFIGGEWVAPVSGRYFTNTTPITGAEIGQIARSEAGDIELALDAAHAAKEKWGATSPAERANIMLKIADRMERNLELLATAETWDNGKPIRETMAADLPLAIDHFRYFAGVLRAQEGSISQIDDDTVAYHFHEPLGVVGQIIPWNFPLLMACWKLAPAIAAGNCVVLKPAEQTPAGIMVWANLIGDLLPPGVLNIVNGFGLEAGKPLASSNRIAKIAFTGETTTGRLIMQYASENLIPVTLELGGKSPNIFFADVAREDDDFFDKALEGFTMFALNQGEVCTCPSRVLIQESIYDKFMERAVQRVQAIKQGDPRESDTMIGAQASSEQKEKILSYLDIGKKEGAEVLTGGKAADLGGELSGGYYIEPTIFRGNNKMRIFQEEIFGPVVSVTTFKDQAEALEIANDTLYGLGAGVWSRDANTCYRMGRGIKAGRVWTNCYHAYPAHAAFGGYKQSGIGRETHKMMLDHYQQTKNMLVSYSPKKLGFF.

Residues E264 and C303 contribute to the active site.

The protein belongs to the aldehyde dehydrogenase family.

The enzyme catalyses acetaldehyde + NAD(+) + H2O = acetate + NADH + 2 H(+). It functions in the pathway organosulfur degradation. Functionally, catalyzes the NAD(+)-dependent oxidation of acetaldehyde to acetate. This chain is Aldehyde dehydrogenase, found in Paracoccus denitrificans (strain Pd 1222).